A 279-amino-acid chain; its full sequence is DegV domain-containing protein SAR1438 (279 aa).

A DegV domain is found at 4–278 (QIIVTDSTSD…QGAIGLVVLK (275 aa)). Residues threonine 61 and serine 93 each contribute to the hexadecanoate site.

Functionally, may bind long-chain fatty acids, such as palmitate, and may play a role in lipid transport or fatty acid metabolism. In Staphylococcus aureus (strain MRSA252), this protein is DegV domain-containing protein SAR1438.